The chain runs to 447 residues: Tektin-4 (447 aa).

Coiled coils occupy residues 114 to 143 (KSELQREIDELSSETDQMMAQKLRLQRALD), 324 to 348 (KILSEITDQEHQIAALKQAIKDKEA), and 375 to 423 (FRLM…TNSL).

It belongs to the tektin family. As to quaternary structure, microtubule inner protein component of sperm flagellar doublet microtubules. Post-translationally, ubiquitinated, leading to its degradation. Deubiquitinated by USP16, promoting its stability.

It localises to the cytoplasm. It is found in the cytoskeleton. Its subcellular location is the cilium axoneme. The protein resides in the flagellum axoneme. In terms of biological role, microtubule inner protein (MIP) part of the dynein-decorated doublet microtubules (DMTs) in cilia and flagellar axoneme. Forms filamentous polymers in the walls of ciliary and flagellar microtubules. Contributes to normal sperm motility. In Rattus norvegicus (Rat), this protein is Tektin-4 (Tekt4).